The sequence spans 132 residues: Small ribosomal subunit protein uS8c (132 aa).

This sequence belongs to the universal ribosomal protein uS8 family. In terms of assembly, part of the 30S ribosomal subunit.

It localises to the plastid. It is found in the chloroplast. In terms of biological role, one of the primary rRNA binding proteins, it binds directly to 16S rRNA central domain where it helps coordinate assembly of the platform of the 30S subunit. This chain is Small ribosomal subunit protein uS8c (rps8), found in Acorus calamus (Sweet flag).